Here is a 192-residue protein sequence, read N- to C-terminus: Probable cobalt-precorrin-6B C(15)-methyltransferase (decarboxylating) (192 aa).

Residues Thr20, 44 to 48, Glu68, and Ala96 contribute to the S-adenosyl-L-methionine site; that span reads GSGTG.

This sequence belongs to the methyltransferase superfamily. Archaeal-type CbiT family.

The enzyme catalyses Co-precorrin-6B + S-adenosyl-L-methionine = Co-precorrin-7 + S-adenosyl-L-homocysteine + CO2. It functions in the pathway cofactor biosynthesis; adenosylcobalamin biosynthesis; cob(II)yrinate a,c-diamide from sirohydrochlorin (anaerobic route): step 8/10. Its function is as follows. Catalyzes the methylation of C-15 in cobalt-precorrin-6B followed by the decarboxylation of C-12 to form cobalt-precorrin-7. The protein is Probable cobalt-precorrin-6B C(15)-methyltransferase (decarboxylating) of Sulfurisphaera tokodaii (strain DSM 16993 / JCM 10545 / NBRC 100140 / 7) (Sulfolobus tokodaii).